Reading from the N-terminus, the 607-residue chain is MKNSYKWDLSVLLNNQSLQANFLKIQTVSEALIKAYNNGLCFTNKTSFEQFLAIDDKFTELENRYTNYLYNKQNENNLDKEVNDAIFAYQSFKNNHNLAFSTLQQELYNHEKLIKDYLTDPKLAVYKRNLMLVFRDKPHQLSSQTQSLLSQINPCFNQAERIFNILSTADLNLQPVVYQNKKYPINSVSDYQSLLENTNRGIRKACYEKWIEIYWTNRNSLSLSLVENYIQLENFAKLKNHPSYIAQTAFNDEIEVGFIDFVYQQVAQFAKTFQAFIRLKKQIYKHVLKVNKVEPYDLTLTLFKTKKSYTIEQAKQDALKVLDLLGDNYIKIVKKAFNENWIDWLADKNKYTGAYSISNVKGLEHFFILMNFDKTKSSLNTLVHELGHSVHSWYASQHQSQNIDPTIFYAEIASIANELLLCYYELQLYKNNHKQLIASLLSQINHFFGATTRQIMFSQFEKDTLYLIRVNQKPDFKTLIKIYANTAVKYQGFKPEVVANKLKKTQYQKSLSHIIAIPHFYAGNFYVYKYAIGQVAGILVAKKINSGDKKMKDNYFKFLSSGSSLAPLETIKLLGIDLTSPQPWQEAHNEVKRWLKIVKQSFKKLQK.

Histidine 384 contributes to the Zn(2+) binding site. Glutamate 385 is a catalytic residue. Residues histidine 388 and histidine 391 each contribute to the Zn(2+) site.

This sequence belongs to the peptidase M3B family. Requires Zn(2+) as cofactor.

This is Oligoendopeptidase F homolog (pepF) from Mycoplasma genitalium (strain ATCC 33530 / DSM 19775 / NCTC 10195 / G37) (Mycoplasmoides genitalium).